The following is a 104-amino-acid chain: Large ribosomal subunit protein uL24 (104 aa).

Belongs to the universal ribosomal protein uL24 family. Part of the 50S ribosomal subunit.

Its function is as follows. One of two assembly initiator proteins, it binds directly to the 5'-end of the 23S rRNA, where it nucleates assembly of the 50S subunit. Functionally, one of the proteins that surrounds the polypeptide exit tunnel on the outside of the subunit. The sequence is that of Large ribosomal subunit protein uL24 from Azotobacter vinelandii (strain DJ / ATCC BAA-1303).